Reading from the N-terminus, the 955-residue chain is 2-oxoglutarate dehydrogenase E1 component (955 aa).

It belongs to the alpha-ketoglutarate dehydrogenase family. In terms of assembly, homodimer. Part of the 2-oxoglutarate dehydrogenase (OGDH) complex composed of E1 (2-oxoglutarate dehydrogenase), E2 (dihydrolipoamide succinyltransferase) and E3 (dihydrolipoamide dehydrogenase); the complex contains multiple copies of the three enzymatic components (E1, E2 and E3). It depends on thiamine diphosphate as a cofactor.

It carries out the reaction N(6)-[(R)-lipoyl]-L-lysyl-[protein] + 2-oxoglutarate + H(+) = N(6)-[(R)-S(8)-succinyldihydrolipoyl]-L-lysyl-[protein] + CO2. Functionally, E1 component of the 2-oxoglutarate dehydrogenase (OGDH) complex which catalyzes the decarboxylation of 2-oxoglutarate, the first step in the conversion of 2-oxoglutarate to succinyl-CoA and CO(2). The sequence is that of 2-oxoglutarate dehydrogenase E1 component from Bacillus cereus (strain AH820).